The sequence spans 492 residues: 3-octaprenyl-4-hydroxybenzoate carboxy-lyase (492 aa).

N177 lines the Mn(2+) pocket. Residues 180–182, 194–196, and 199–200 each bind prenylated FMN; these read IYR, RWL, and RG. A Mn(2+)-binding site is contributed by E243. The Proton donor role is filled by D292.

This sequence belongs to the UbiD family. In terms of assembly, homohexamer. It depends on prenylated FMN as a cofactor. Mn(2+) is required as a cofactor.

The protein resides in the cell membrane. The enzyme catalyses a 4-hydroxy-3-(all-trans-polyprenyl)benzoate + H(+) = a 2-(all-trans-polyprenyl)phenol + CO2. It participates in cofactor biosynthesis; ubiquinone biosynthesis. Its function is as follows. Catalyzes the decarboxylation of 3-octaprenyl-4-hydroxy benzoate to 2-octaprenylphenol, an intermediate step in ubiquinone biosynthesis. This chain is 3-octaprenyl-4-hydroxybenzoate carboxy-lyase, found in Neisseria meningitidis serogroup B (strain ATCC BAA-335 / MC58).